The primary structure comprises 61 residues: Small ribosomal subunit protein uS14 (61 aa).

Positions 24, 27, 40, and 43 each coordinate Zn(2+).

The protein belongs to the universal ribosomal protein uS14 family. Zinc-binding uS14 subfamily. As to quaternary structure, part of the 30S ribosomal subunit. Contacts proteins S3 and S10. The cofactor is Zn(2+).

Functionally, binds 16S rRNA, required for the assembly of 30S particles and may also be responsible for determining the conformation of the 16S rRNA at the A site. The polypeptide is Small ribosomal subunit protein uS14 (Maridesulfovibrio salexigens (strain ATCC 14822 / DSM 2638 / NCIMB 8403 / VKM B-1763) (Desulfovibrio salexigens)).